The following is a 203-amino-acid chain: Urease accessory protein UreG (203 aa).

14–21 contributes to the GTP binding site; the sequence is GPVGSGKT.

This sequence belongs to the SIMIBI class G3E GTPase family. UreG subfamily. Homodimer. UreD, UreF and UreG form a complex that acts as a GTP-hydrolysis-dependent molecular chaperone, activating the urease apoprotein by helping to assemble the nickel containing metallocenter of UreC. The UreE protein probably delivers the nickel.

It localises to the cytoplasm. Functionally, facilitates the functional incorporation of the urease nickel metallocenter. This process requires GTP hydrolysis, probably effectuated by UreG. This is Urease accessory protein UreG from Rhizobium meliloti (strain 1021) (Ensifer meliloti).